We begin with the raw amino-acid sequence, 219 residues long: 7-cyano-7-deazaguanine synthase (219 aa).

10–20 lines the ATP pocket; the sequence is FSGGQDSTTCL. The Zn(2+) site is built by Cys188, Cys197, Cys200, and Cys203.

It belongs to the QueC family. Zn(2+) serves as cofactor.

It carries out the reaction 7-carboxy-7-deazaguanine + NH4(+) + ATP = 7-cyano-7-deazaguanine + ADP + phosphate + H2O + H(+). It functions in the pathway purine metabolism; 7-cyano-7-deazaguanine biosynthesis. Its function is as follows. Catalyzes the ATP-dependent conversion of 7-carboxy-7-deazaguanine (CDG) to 7-cyano-7-deazaguanine (preQ(0)). The protein is 7-cyano-7-deazaguanine synthase of Bacteroides fragilis (strain ATCC 25285 / DSM 2151 / CCUG 4856 / JCM 11019 / LMG 10263 / NCTC 9343 / Onslow / VPI 2553 / EN-2).